The primary structure comprises 687 residues: MSSYVGVLVSDPWLQSQFTQVELRTLKSKFVSNKTQLGRFTVGDLPPVFEKLKAFNGTIDEDEIKSVLDKSYPNADDEVDFEFFLRAFLSVQARGVEKSGGSKGASSFLKTSTTTVHHAINESEKASYVSHVNNYLRDDPFLKSYLPIDPATNAFFDLVKDGVLLCKLINVAVPGTIDERAINTKKTLNPWERNENLTLGLNSAKAIGCTVVNIGTQDIAEGRPYLVLGLISQIIKIQMLADLNFKKTPSLFQLVDDTQDAEELMGLAPEKVLLKWMNFHLKKAGYEKQVTNFSSDLKDGEAYAYLLNALAPEHSTHVALETKDPTERAKKVLEQAEKLDCKRYLSPKDIVDGSANLNLAFVAQIFQHRNGLTVDDSKTSFAEMMTDDVETSREERCFRLWINSLGTATYVNNVFEDLRNGWVLLEVLDKVSPGSVNWKHANKPPIKMPFKKVENCNEVIKIGKELRFSLVNVAGNDIVQGNKKLLLAFLWQLMRYTMLQLLRNLRSHSQGKEITDADILNWANRKVKRGGRTSQADSFRDKNLSSGMFFLELLSAVEPRVVNWSLVTNGETEEDKKLNATYIISVARKLGCSIFLLPEDIIEVNQKMMLILAASIMYWSLQQQSDTESTVSEDATDDGDANSVAGEISNLSIDGASESSPTVQDQELLTKADNDEDEVDGENNKDA.

The EF-hand domain maps to Val-7–Asn-74. 4 Calponin-homology (CH) domains span residues Glu-122–Met-239, Leu-267–Asn-370, Ser-392–Met-498, and Glu-513–Leu-621. 2 actin-binding regions span residues Glu-122–Asn-370 and Ser-392–Leu-621. Residues Glu-628–Ala-687 are disordered. Residues Ser-649–Glu-667 are compositionally biased toward polar residues.

As to quaternary structure, interacts with F-actin. As to expression, expressed in mature pollen.

It localises to the cytoplasm. The protein resides in the cytoskeleton. Cross-links actin filaments (F-actin) in a calcium independent manner. Induces the formation of actin bundles. Stabilizes and prevents F-actin depolymerization mediated by latrunculin B (LatB). The chain is Fimbrin-5 from Arabidopsis thaliana (Mouse-ear cress).